Reading from the N-terminus, the 787-residue chain is uncharacterized protein (787 aa).

Met-1 bears the N-acetylmethionine mark. 3 disordered regions span residues 1–115 (MFDG…NDHK), 130–200 (TNPF…QRSE), and 217–238 (VSSG…ASQD). Polar residues predominate over residues 36 to 54 (VPSTIKKSTNIARTSTAET). Ser-63 is modified (phosphoserine). The span at 130-142 (TNPFTTSANSNAH) shows a compositional bias: polar residues. The segment covering 160-169 (SITTSISNNT) has biased composition (low complexity). A compositionally biased stretch (basic and acidic residues) spans 170 to 184 (TKEEIESNNDSERDS). The segment covering 218–230 (SSGSSLSLDTSEN) has biased composition (low complexity). 10 positions are modified to phosphoserine: Ser-254, Ser-313, Ser-342, Ser-345, Ser-390, Ser-477, Ser-492, Ser-546, Ser-683, and Ser-699.

The protein localises to the cytoplasm. This is an uncharacterized protein from Saccharomyces cerevisiae (strain ATCC 204508 / S288c) (Baker's yeast).